A 458-amino-acid polypeptide reads, in one-letter code: uncharacterized protein (458 aa).

Basic and acidic residues predominate over residues 1 to 10; the sequence is MQAEPKKSQA. The segment at 1 to 20 is disordered; that stretch reads MQAEPKKSQAEQRAVAEPVS. One can recognise a TRAM domain in the interval 23-84; the sequence is VSLVGEEYEV…ARFLRADAVE (62 aa). Residues cysteine 97, cysteine 105, cysteine 108, and cysteine 193 each coordinate [4Fe-4S] cluster. The S-adenosyl-L-methionine site is built by glutamine 287, tyrosine 316, glutamate 340, and aspartate 384. The active-site Nucleophile is cysteine 411.

The protein belongs to the class I-like SAM-binding methyltransferase superfamily. RNA M5U methyltransferase family.

This is an uncharacterized protein from Streptomyces coelicolor (strain ATCC BAA-471 / A3(2) / M145).